Consider the following 740-residue polypeptide: Isocitrate dehydrogenase [NADP] 2 (740 aa).

Residues Asn83 and Ser85 each contribute to the NADP(+) site. Residues Ser130, Asn133, Arg137, Arg143, and Lys253 each contribute to the D-threo-isocitrate site. Asn133 provides a ligand contact to NADP(+). Asp348 contacts Mg(2+). Residues Tyr418 and Arg546 each contribute to the D-threo-isocitrate site. Asp547 and Asp551 together coordinate Mg(2+). NADP(+) is bound by residues Ser584, His588, Arg599, Asp601, and Arg648.

This sequence belongs to the monomeric-type IDH family. As to quaternary structure, monomer. Requires Mg(2+) as cofactor. It depends on Mn(2+) as a cofactor.

It catalyses the reaction D-threo-isocitrate + NADP(+) = 2-oxoglutarate + CO2 + NADPH. With respect to regulation, IDH activity is not significantly affected by monovalent cations. The combined addition of Mn(2+) and another divalent cation results in the decrease of the activity. Catalyzes the oxidative decarboxylation of isocitrate to 2-oxoglutarate and carbon dioxide with the concomitant reduction of NADP(+). Cannot use NAD(+). This Psychrobacter sp. (strain 13A) protein is Isocitrate dehydrogenase [NADP] 2.